Reading from the N-terminus, the 528-residue chain is (R)-citramalate synthase (528 aa).

One can recognise a Pyruvate carboxyltransferase domain in the interval 5–271 (VYIYDTTLRD…IPQENLKKLT (267 aa)).

This sequence belongs to the alpha-IPM synthase/homocitrate synthase family.

The catalysed reaction is pyruvate + acetyl-CoA + H2O = (3R)-citramalate + CoA + H(+). The protein operates within amino-acid biosynthesis; L-isoleucine biosynthesis; 2-oxobutanoate from pyruvate: step 1/3. Its function is as follows. Catalyzes the condensation of pyruvate and acetyl-coenzyme A to form (R)-citramalate. This chain is (R)-citramalate synthase, found in Aquifex aeolicus (strain VF5).